Reading from the N-terminus, the 275-residue chain is tRNA pseudouridine synthase A (275 aa).

The active-site Nucleophile is the D62. Substrate is bound at residue Y124.

It belongs to the tRNA pseudouridine synthase TruA family. Homodimer.

The catalysed reaction is uridine(38/39/40) in tRNA = pseudouridine(38/39/40) in tRNA. Formation of pseudouridine at positions 38, 39 and 40 in the anticodon stem and loop of transfer RNAs. The sequence is that of tRNA pseudouridine synthase A from Herminiimonas arsenicoxydans.